Consider the following 461-residue polypeptide: Serine carboxypeptidase-like 45 (461 aa).

Residues 1 to 24 (MSPLQWLTISFALIIFHSLTVSSS) form the signal peptide. Intrachain disulfides connect Cys-86–Cys-340, Cys-243–Cys-261, and Cys-286–Cys-309. A glycan (N-linked (GlcNAc...) asparagine) is linked at Asn-168. Ser-177 is a catalytic residue. A glycan (N-linked (GlcNAc...) asparagine) is linked at Asn-244. Residues Asp-377 and His-434 contribute to the active site.

The protein belongs to the peptidase S10 family. In terms of tissue distribution, ubiquitous.

It localises to the secreted. Probable carboxypeptidase. This chain is Serine carboxypeptidase-like 45 (SCPL45), found in Arabidopsis thaliana (Mouse-ear cress).